We begin with the raw amino-acid sequence, 725 residues long: Glutamine-dependent NAD(+) synthetase (725 aa).

One can recognise a CN hydrolase domain in the interval 5–275 (VTVATCALNQ…VEVLTATLDL (271 aa)). The active-site Proton acceptor; for glutaminase activity is glutamate 45. Lysine 114 functions as the For glutaminase activity in the catalytic mechanism. The active-site Nucleophile; for glutaminase activity is cysteine 175. The interval 325–706 (YHRPEEEISL…KTSQTLEEQI (382 aa)) is ligase. ATP is bound at residue 355–362 (PLSGGVDS). Residue serine 357 is part of the active site.

This sequence in the C-terminal section; belongs to the NAD synthetase family. As to quaternary structure, homohexamer.

It catalyses the reaction deamido-NAD(+) + L-glutamine + ATP + H2O = L-glutamate + AMP + diphosphate + NAD(+) + H(+). Its pathway is cofactor biosynthesis; NAD(+) biosynthesis; NAD(+) from deamido-NAD(+) (L-Gln route): step 1/1. In terms of biological role, catalyzes the final step of the nicotinamide adenine dinucleotide (NAD) de novo synthesis pathway, the ATP-dependent amidation of deamido-NAD using L-glutamine as a nitrogen source. This Rattus norvegicus (Rat) protein is Glutamine-dependent NAD(+) synthetase (Nadsyn1).